The following is a 134-amino-acid chain: Profilin-2 (134 aa).

Cysteines 13 and 118 form a disulfide. An Involved in PIP2 interaction motif is present at residues 84 to 100; the sequence is AVIRGKKGSGGITIKKT. A Phosphothreonine modification is found at T114.

This sequence belongs to the profilin family. As to quaternary structure, occurs in many kinds of cells as a complex with monomeric actin in a 1:1 ratio. In terms of processing, phosphorylated by MAP kinases.

The protein localises to the cytoplasm. Its subcellular location is the cytoskeleton. Its function is as follows. Binds to actin and affects the structure of the cytoskeleton. At high concentrations, profilin prevents the polymerization of actin, whereas it enhances it at low concentrations. The chain is Profilin-2 from Olea europaea (Common olive).